The chain runs to 95 residues: Beta-defensin 132 (95 aa).

Residues 1–22 (MKFLLLVLAALGFLTQVIPASG) form the signal peptide. 3 cysteine pairs are disulfide-bonded: C27-C55, C35-C49, and C39-C56. The segment at 72–95 (GNHWPSRSRNTQRKNKKQQTTVTP) is disordered.

It belongs to the beta-defensin family.

It is found in the secreted. In terms of biological role, has antibacterial activity. This is Beta-defensin 132 (DEFB132) from Macaca fascicularis (Crab-eating macaque).